The primary structure comprises 664 residues: Macoilin (664 aa).

Helical transmembrane passes span 28 to 48, 75 to 95, 120 to 140, and 154 to 174; these read TFLY…DFVL, AFSV…LLFI, VCLP…AIRF, and FAAH…KSYV. A compositionally biased stretch (basic and acidic residues) spans 253 to 265; that stretch reads REKGKEKDKDAKK. The tract at residues 253–274 is disordered; the sequence is REKGKEKDKDAKKHNLGINNNN. Position 305 is a phosphoserine (serine 305). Polar residues predominate over residues 320–348; the sequence is KNYKNASGVVNSSPRSHSATNGSIPSSSS. Residues 320–375 form a disordered region; that stretch reads KNYKNASGVVNSSPRSHSATNGSIPSSSSKNEKKQKCTSKGPSAHKDLMENCIPNN. N-linked (GlcNAc...) asparagine glycosylation occurs at asparagine 324. Residue serine 332 is modified to Phosphoserine. Residues asparagine 340 and asparagine 452 are each glycosylated (N-linked (GlcNAc...) asparagine). Positions 630–664 are disordered; that stretch reads TSPLSPVSPHYSSKFVETSPSGLDPNASVYQPLKK. Phosphoserine is present on residues serine 631 and serine 634. Residue asparagine 655 is glycosylated (N-linked (GlcNAc...) asparagine).

The protein belongs to the macoilin family. Strong expression in whole nervous system up to 12.5 dpc. Highly expressed in all neuronal differentiation fields from 14.5 dpc to birth, with highest expression in the telencephalic cortical plate and mitral cells in the olfactory bulb, and lower expression in neuronal progenitor zones. Progressively decreased expression in fields of neuron precursor proliferation from 14.5 dpc and virtually undetectable there by 17.5 dpc. No significant expression detected outside the nervous system. After birth, significant expression remains in the cerebellum, olfactory bulb and hippocampus.

The protein localises to the rough endoplasmic reticulum membrane. Its subcellular location is the nucleus membrane. Functionally, plays a role in the regulation of neuronal activity. This is Macoilin (Maco1) from Mus musculus (Mouse).